The sequence spans 143 residues: Ninjurin-2 (143 aa).

Topologically, residues Met1 to Ala61 are extracellular. Residues Asn26 to Met38 form a helix alpha1 region. A helix alpha2 region spans residues Leu39–Gly58. Residues Glu62–Leu93 traverse the membrane as a helical segment. Topologically, residues Asn94 to Glu97 are cytoplasmic. A helical transmembrane segment spans residues Asn98–Gly127. Residue Lys104 coordinates cholesterol. Topologically, residues Ala128–Ile143 are extracellular.

Belongs to the ninjurin family. Homooligomer; in response to stimuli, homooligomerizes into filaments. In contrast to NINJ1, the filament is curved toward the intracellular space, preventing its circularization on a relatively flat membrane to mediate plasma membrane rupture: curvature is caused by cholesterol-binding at the cytoplasmic leaflet.

The protein resides in the cell membrane. Its function is as follows. Its role in unclear. In contrast to NINJ1 paralog, does not mediate plasma membrane rupture (cytolysis) downstream of necroptotic and pyroptotic programmed cell death. While it is able to oligomerize and form filaments, filaments are curved toward the intracellular space, preventing circularization to mediate plasma membrane rupture. May act as a homophilic transmembrane adhesion molecule involved in nerve regeneration. Promotes axonal growth. The polypeptide is Ninjurin-2 (Ninj2) (Mus musculus (Mouse)).